Reading from the N-terminus, the 204-residue chain is MASSVTLLLWSLLLLGTLSAIQAKKSKENLKEITHKVYFDVEIDGKAAGRIVMGLFGKTVPKTVENFRALCTGEKGIGKNGKALHYKGSSFHRIIPSFMLQGGDFTHGNGMGGESIYGEKFADENFKLKHTGPGFLSMANAGQDTNGSQFFITTVTTSWLDGRHVVFGKVVTGMDVVYKVEAEGNQSGTPKSKVVIVDSGELPL.

Residues 1–23 (MASSVTLLLWSLLLLGTLSAIQA) form the signal peptide. Residues 38-201 (YFDVEIDGKA…SKVVIVDSGE (164 aa)) enclose the PPIase cyclophilin-type domain.

The protein belongs to the cyclophilin-type PPIase family. In terms of assembly, interacts with the PP2A A subunit PP2AA1/RCN1. Ubiquitous, mostly in aerial organs. Higher levels in leaf and buds, and lower levels in seedlings.

It localises to the endoplasmic reticulum. The protein localises to the secreted. It catalyses the reaction [protein]-peptidylproline (omega=180) = [protein]-peptidylproline (omega=0). Binds cyclosporin A (CsA). CsA mediates some of its effects via an inhibitory action on PPIase. Its function is as follows. PPIases accelerate the folding of proteins. It catalyzes the cis-trans isomerization of proline imidic peptide bonds in oligopeptides. Seems to be involved in root development. This chain is Peptidyl-prolyl cis-trans isomerase CYP20-1 (CYP20-1), found in Arabidopsis thaliana (Mouse-ear cress).